The following is a 465-amino-acid chain: UDP-N-acetylmuramate--L-alanine ligase (465 aa).

Residue 112–118 (GTHGKTT) coordinates ATP.

Belongs to the MurCDEF family.

The protein localises to the cytoplasm. It catalyses the reaction UDP-N-acetyl-alpha-D-muramate + L-alanine + ATP = UDP-N-acetyl-alpha-D-muramoyl-L-alanine + ADP + phosphate + H(+). It functions in the pathway cell wall biogenesis; peptidoglycan biosynthesis. In terms of biological role, cell wall formation. The polypeptide is UDP-N-acetylmuramate--L-alanine ligase (Burkholderia thailandensis (strain ATCC 700388 / DSM 13276 / CCUG 48851 / CIP 106301 / E264)).